The chain runs to 368 residues: MNKRDYYEVLGLSQGASKDEIKKAYRRLAKKYHPDVSKEENAIEKFKEVQEAYEVLSDDQKRAQYDQFGHAGPNQGFGGGGDFGGGFGFEDIFSSFFGGGGGRRRDPNAPRQGADLQYQVTLEFEEAIFGKELNVEIPVEDPCDTCKGSGAKPGTSKETCKHCSGSGQVSVEQNTPFGRIVNRQACGHCSGTGQMIKEKCTTCHGSGKVRKRKKINVKIPAGIDNGQQIRVSGKGEAGVNGGPAGDLYVVVHVRNHEFFEREGDHIICEMPITFAQMALGAEVEVPTVHGKVKLKIPAGTQTGTEFRLKGKGAPNVRGYGQGDQYVVVRVVVPTKLTSHQKDLLREFAGQEEQDDSLFRKLKRAFKGE.

A J domain is found at 5-69 (DYYEVLGLSQ…QKRAQYDQFG (65 aa)). A CR-type zinc finger spans residues 130–212 (GKELNVEIPV…CHGSGKVRKR (83 aa)). Residues C143, C146, C160, C163, C186, C189, C200, and C203 each coordinate Zn(2+). CXXCXGXG motif repeat units follow at residues 143–150 (CDTCKGSG), 160–167 (CKHCSGSG), 186–193 (CGHCSGTG), and 200–207 (CTTCHGSG).

The protein belongs to the DnaJ family. Homodimer. Requires Zn(2+) as cofactor.

It localises to the cytoplasm. In terms of biological role, participates actively in the response to hyperosmotic and heat shock by preventing the aggregation of stress-denatured proteins and by disaggregating proteins, also in an autonomous, DnaK-independent fashion. Unfolded proteins bind initially to DnaJ; upon interaction with the DnaJ-bound protein, DnaK hydrolyzes its bound ATP, resulting in the formation of a stable complex. GrpE releases ADP from DnaK; ATP binding to DnaK triggers the release of the substrate protein, thus completing the reaction cycle. Several rounds of ATP-dependent interactions between DnaJ, DnaK and GrpE are required for fully efficient folding. Also involved, together with DnaK and GrpE, in the DNA replication of plasmids through activation of initiation proteins. This is Chaperone protein DnaJ from Bacillus mycoides (strain KBAB4) (Bacillus weihenstephanensis).